A 299-amino-acid polypeptide reads, in one-letter code: 33 kDa chaperonin (299 aa).

Intrachain disulfides connect C240/C242 and C273/C276.

Belongs to the HSP33 family. In terms of processing, under oxidizing conditions two disulfide bonds are formed involving the reactive cysteines. Under reducing conditions zinc is bound to the reactive cysteines and the protein is inactive.

The protein localises to the cytoplasm. Its function is as follows. Redox regulated molecular chaperone. Protects both thermally unfolding and oxidatively damaged proteins from irreversible aggregation. Plays an important role in the bacterial defense system toward oxidative stress. This is 33 kDa chaperonin from Thermosynechococcus vestitus (strain NIES-2133 / IAM M-273 / BP-1).